We begin with the raw amino-acid sequence, 59 residues long: MAVPKKRTSMSKKRIRKNLWKKKTYFSIVQSYSLAKSRSFSSGNEHPKPKGFSGQQANK.

The tract at residues 37–59 (SRSFSSGNEHPKPKGFSGQQANK) is disordered.

The protein belongs to the bacterial ribosomal protein bL32 family.

The protein resides in the plastid. It localises to the chloroplast. This chain is Large ribosomal subunit protein bL32c, found in Saccharum hybrid (Sugarcane).